A 478-amino-acid polypeptide reads, in one-letter code: Membrane-bound lytic murein transglycosylase F (478 aa).

The first 22 residues, M1–V22, serve as a signal peptide directing secretion. The non-LT domain stretch occupies residues E23–V257. The tract at residues K258–K478 is LT domain. The active site involves E302. Positions S446–K478 are disordered. Residues S451–S461 show a composition bias toward acidic residues.

In the N-terminal section; belongs to the bacterial solute-binding protein 3 family. It in the C-terminal section; belongs to the transglycosylase Slt family.

Its subcellular location is the cell outer membrane. The catalysed reaction is Exolytic cleavage of the (1-&gt;4)-beta-glycosidic linkage between N-acetylmuramic acid (MurNAc) and N-acetylglucosamine (GlcNAc) residues in peptidoglycan, from either the reducing or the non-reducing ends of the peptidoglycan chains, with concomitant formation of a 1,6-anhydrobond in the MurNAc residue.. Its function is as follows. Murein-degrading enzyme that degrades murein glycan strands and insoluble, high-molecular weight murein sacculi, with the concomitant formation of a 1,6-anhydromuramoyl product. Lytic transglycosylases (LTs) play an integral role in the metabolism of the peptidoglycan (PG) sacculus. Their lytic action creates space within the PG sacculus to allow for its expansion as well as for the insertion of various structures such as secretion systems and flagella. The chain is Membrane-bound lytic murein transglycosylase F from Shewanella sp. (strain ANA-3).